A 713-amino-acid polypeptide reads, in one-letter code: Ribosomal RNA large subunit methyltransferase K/L (713 aa).

The THUMP domain maps to 43 to 154 (LAYRITLWTR…NGVITIAMNF (112 aa)).

It belongs to the methyltransferase superfamily. RlmKL family.

It is found in the cytoplasm. It carries out the reaction guanosine(2445) in 23S rRNA + S-adenosyl-L-methionine = N(2)-methylguanosine(2445) in 23S rRNA + S-adenosyl-L-homocysteine + H(+). It catalyses the reaction guanosine(2069) in 23S rRNA + S-adenosyl-L-methionine = N(2)-methylguanosine(2069) in 23S rRNA + S-adenosyl-L-homocysteine + H(+). In terms of biological role, specifically methylates the guanine in position 2445 (m2G2445) and the guanine in position 2069 (m7G2069) of 23S rRNA. The chain is Ribosomal RNA large subunit methyltransferase K/L from Shewanella sp. (strain MR-7).